The sequence spans 339 residues: Glycerol-3-phosphate dehydrogenase [NAD(P)+] (339 aa).

Positions 11, 12, and 109 each coordinate NADPH. Residues lysine 109, glycine 140, and serine 142 each contribute to the sn-glycerol 3-phosphate site. Alanine 144 contributes to the NADPH binding site. 5 residues coordinate sn-glycerol 3-phosphate: lysine 195, aspartate 249, serine 259, arginine 260, and asparagine 261. Residue lysine 195 is the Proton acceptor of the active site. Arginine 260 serves as a coordination point for NADPH. Residues valine 284 and glutamate 286 each coordinate NADPH.

The protein belongs to the NAD-dependent glycerol-3-phosphate dehydrogenase family.

Its subcellular location is the cytoplasm. It catalyses the reaction sn-glycerol 3-phosphate + NAD(+) = dihydroxyacetone phosphate + NADH + H(+). It carries out the reaction sn-glycerol 3-phosphate + NADP(+) = dihydroxyacetone phosphate + NADPH + H(+). It functions in the pathway membrane lipid metabolism; glycerophospholipid metabolism. Catalyzes the reduction of the glycolytic intermediate dihydroxyacetone phosphate (DHAP) to sn-glycerol 3-phosphate (G3P), the key precursor for phospholipid synthesis. The sequence is that of Glycerol-3-phosphate dehydrogenase [NAD(P)+] from Lactobacillus helveticus (strain DPC 4571).